We begin with the raw amino-acid sequence, 214 residues long: Reticulon-3-B (214 aa).

The disordered stretch occupies residues 1-22 (MAETSGPQSSHISSSSAGDKGS). In terms of domain architecture, Reticulon spans 26–214 (VRDLLYWRDV…LPGALKKKSE (189 aa)). 2 consecutive transmembrane segments (helical) span residues 46–66 (MVLL…YLVL) and 150–170 (TYIG…LLAF).

In terms of assembly, homodimer.

Its subcellular location is the endoplasmic reticulum membrane. The protein localises to the golgi apparatus membrane. In terms of biological role, may be involved in membrane trafficking in the early secretory pathway. In Xenopus laevis (African clawed frog), this protein is Reticulon-3-B (rtn3-b).